Reading from the N-terminus, the 353-residue chain is Ribosomal RNA small subunit methyltransferase H (353 aa).

S-adenosyl-L-methionine is bound by residues 50 to 52, D69, F96, D117, and Q124; that span reads GGY. The segment at 276 to 353 is disordered; it reads AAQASRHVPG…PAPQGRGPRR (78 aa).

This sequence belongs to the methyltransferase superfamily. RsmH family.

It is found in the cytoplasm. It carries out the reaction cytidine(1402) in 16S rRNA + S-adenosyl-L-methionine = N(4)-methylcytidine(1402) in 16S rRNA + S-adenosyl-L-homocysteine + H(+). Its function is as follows. Specifically methylates the N4 position of cytidine in position 1402 (C1402) of 16S rRNA. This Methylorubrum extorquens (strain CM4 / NCIMB 13688) (Methylobacterium extorquens) protein is Ribosomal RNA small subunit methyltransferase H.